A 237-amino-acid polypeptide reads, in one-letter code: Ribonuclease PH (237 aa).

Residues Arg86 and 124–126 each bind phosphate; that span reads GTR.

This sequence belongs to the RNase PH family. Homohexameric ring arranged as a trimer of dimers.

It carries out the reaction tRNA(n+1) + phosphate = tRNA(n) + a ribonucleoside 5'-diphosphate. Functionally, phosphorolytic 3'-5' exoribonuclease that plays an important role in tRNA 3'-end maturation. Removes nucleotide residues following the 3'-CCA terminus of tRNAs; can also add nucleotides to the ends of RNA molecules by using nucleoside diphosphates as substrates, but this may not be physiologically important. Probably plays a role in initiation of 16S rRNA degradation (leading to ribosome degradation) during starvation. This chain is Ribonuclease PH, found in Shewanella denitrificans (strain OS217 / ATCC BAA-1090 / DSM 15013).